Reading from the N-terminus, the 612-residue chain is Bifunctional lycopene cyclase/phytoene synthase (612 aa).

The lycopene beta-cyclase stretch occupies residues 1-268; the sequence is MGWEYAQVHL…IVFGLIACDN (268 aa). Transmembrane regions (helical) follow at residues 3 to 23, 31 to 51, 112 to 130, 148 to 168, 171 to 191, 203 to 223, and 246 to 266; these read WEYA…LAAV, LDVF…VKGL, LFFF…MILS, IAGQ…VSSG, GMYM…LWSI, NTAL…TFAL, and IEEA…LIAC. Residues 275–612 form a phytoene synthase region; sequence TFPEHFPRTK…IRVAWSALNK (338 aa).

In the N-terminal section; belongs to the lycopene beta-cyclase family. This sequence in the C-terminal section; belongs to the phytoene/squalene synthase family.

The protein localises to the membrane. It carries out the reaction all-trans-lycopene = gamma-carotene. The enzyme catalyses gamma-carotene = all-trans-beta-carotene. It catalyses the reaction 2 (2E,6E,10E)-geranylgeranyl diphosphate = 15-cis-phytoene + 2 diphosphate. It participates in carotenoid biosynthesis; beta-carotene biosynthesis. It functions in the pathway carotenoid biosynthesis; phytoene biosynthesis; all-trans-phytoene from geranylgeranyl diphosphate: step 1/1. In terms of biological role, bifunctional enzyme; part of the car gene cluster that mediates the biosynthesis of neurosporaxanthin, a carboxylic apocarotenoid acting as an essential protective pigments and leading to orange pigmentation. CarAR catalyzes the first step of the pathway by converting geranylgeranyl diphosphate to phytoene, as well as the later cyclization step that transforms the carB product lycopene into gamma-carotene. CarAR also converts part of gamma-carotene into beta-carotene. Neurosporaxanthin is synthesized from geranyl-geranyl pyrophosphate (GGPP) through several enzymatic activities. Phytoene synthase activity performed by the bifunctional enzyme carAR first produces phytoene from geranyl-geranyl pyrophosphate (GGPP). The phytoene dehydrogenase carB then introduces 4 desaturations to lead to lycopene which is substrate of the carotene cyclase activity of carAR that leads to the production of gamma-carotene. CarB then performs a 5th desaturation reaction to yield torulene. Torulene is the substrate of the dioxidase carT that breaks the molecule, removing five carbon atoms to yield beta-apo-4'-carotenal, whereas the aldehyde dehydrogenase carD mediates the last step by converting beta-apo-4'-carotenal into neurosporaxanthin. This chain is Bifunctional lycopene cyclase/phytoene synthase, found in Fusarium fujikuroi (Bakanae and foot rot disease fungus).